A 58-amino-acid chain; its full sequence is Small ribosomal subunit protein bS21 (58 aa).

It belongs to the bacterial ribosomal protein bS21 family.

This Lactobacillus johnsonii (strain CNCM I-12250 / La1 / NCC 533) protein is Small ribosomal subunit protein bS21.